The chain runs to 252 residues: Chitooligosaccharide deacetylase (252 aa).

Histidine 61 and histidine 125 together coordinate Mg(2+).

Belongs to the YdjC deacetylase family. ChbG subfamily. Homodimer. The cofactor is Mg(2+).

The protein resides in the cytoplasm. It catalyses the reaction N,N'-diacetylchitobiose + H2O = N-acetyl-beta-D-glucosaminyl-(1-&gt;4)-D-glucosamine + acetate. The enzyme catalyses diacetylchitobiose-6'-phosphate + H2O = N'-monoacetylchitobiose-6'-phosphate + acetate. Its pathway is glycan degradation; chitin degradation. Its function is as follows. Involved in the degradation of chitin. ChbG is essential for growth on the acetylated chitooligosaccharides chitobiose and chitotriose but is dispensable for growth on cellobiose and chitosan dimer, the deacetylated form of chitobiose. Deacetylation of chitobiose-6-P and chitotriose-6-P is necessary for both the activation of the chb promoter by the regulatory protein ChbR and the hydrolysis of phosphorylated beta-glucosides by the phospho-beta-glucosidase ChbF. Catalyzes the removal of only one acetyl group from chitobiose-6-P to yield monoacetylchitobiose-6-P, the inducer of ChbR and the substrate of ChbF. This is Chitooligosaccharide deacetylase from Salmonella dublin (strain CT_02021853).